Consider the following 359-residue polypeptide: Chorismate synthase (359 aa).

Position 47 (Arg-47) interacts with NADP(+). FMN contacts are provided by residues 123–125 (RSS), Gly-283, 298–302 (KPTSS), and Arg-326.

Belongs to the chorismate synthase family. Homotetramer. FMNH2 serves as cofactor.

The enzyme catalyses 5-O-(1-carboxyvinyl)-3-phosphoshikimate = chorismate + phosphate. Its pathway is metabolic intermediate biosynthesis; chorismate biosynthesis; chorismate from D-erythrose 4-phosphate and phosphoenolpyruvate: step 7/7. Catalyzes the anti-1,4-elimination of the C-3 phosphate and the C-6 proR hydrogen from 5-enolpyruvylshikimate-3-phosphate (EPSP) to yield chorismate, which is the branch point compound that serves as the starting substrate for the three terminal pathways of aromatic amino acid biosynthesis. This reaction introduces a second double bond into the aromatic ring system. This is Chorismate synthase from Chlamydia abortus (strain DSM 27085 / S26/3) (Chlamydophila abortus).